The sequence spans 298 residues: ATP phosphoribosyltransferase (298 aa).

This sequence belongs to the ATP phosphoribosyltransferase family. Long subfamily. Mg(2+) is required as a cofactor.

The protein resides in the cytoplasm. It catalyses the reaction 1-(5-phospho-beta-D-ribosyl)-ATP + diphosphate = 5-phospho-alpha-D-ribose 1-diphosphate + ATP. It participates in amino-acid biosynthesis; L-histidine biosynthesis; L-histidine from 5-phospho-alpha-D-ribose 1-diphosphate: step 1/9. Its activity is regulated as follows. Feedback inhibited by histidine. Functionally, catalyzes the condensation of ATP and 5-phosphoribose 1-diphosphate to form N'-(5'-phosphoribosyl)-ATP (PR-ATP). Has a crucial role in the pathway because the rate of histidine biosynthesis seems to be controlled primarily by regulation of HisG enzymatic activity. This is ATP phosphoribosyltransferase from Psychromonas ingrahamii (strain DSM 17664 / CCUG 51855 / 37).